A 233-amino-acid chain; its full sequence is MLKPSVTSAPTADMATLTVVQPLTLDRDVARAIELLEKLQESGEVPVHKLQSLKKVLQSEFCTAIREVYQYMHETITVNGCPEFRARATAKATVAAFAASEGHSHPRVVELPKTDEGLGFNVMGGKEQNSPIYISRIIPGGVAERHGGLKRGDQLLSVNGVSVEGEHHEKAVELLKAAKDSVKLVVRYTPKVLEEMEARFEKLRTARRRQQQQLLIQQQQQQQQQQPQQNHMS.

Positions 14-28 (MATLTVVQPLTLDRD) match the Kinase interacting site motif. Residues 25 to 80 (LDRDVARAIELLEKLQESGEVPVHKLQSLKKVLQSEFCTAIREVYQYMHETITVNG) form the L27 domain. The region spanning 108-190 (VVELPKTDEG…SVKLVVRYTP (83 aa)) is the PDZ domain. Positions 214–233 (LLIQQQQQQQQQQPQQNHMS) are disordered.

Belongs to the lin-7 family. Forms a complex with CASK and CASKIN1. Component of the brain-specific heterotrimeric complex (LIN-10-LIN-2-LIN-7 complex) composed of at least APBA1, CASK, and LIN7, which associates with the motor protein KIF17 to transport vesicles along microtubules. Can also interact with other modular proteins containing protein-protein interaction domains like PALS1, PALS2, MPP7, DLG1, DLG2 and DLG3 through its L27 domain. Interacts with DLG4, GRIN2B and MARCHF11 as well as CDH1 and CTNNB1, the channels KCNJ12/Kir2.2, KCNJ4/Kir2.3 and probably KCNJ2/Kir2.1 and SLC6A12/BGT-1 via its PDZ domain. The association of LIN7A with cadherin and beta-catenin is calcium-dependent, occurs at synaptic junctions and requires the actin cytoskeleton. Interacts with EGFR, ERBB2, ERBB3 and ERBB4 with both PDZ and KID domains. Associates with KIF17 via APBA1. Interacts with HTR4. Forms a tripartite complex composed of DLG1, MPP7 and LIN7 (LIN7A or LIN7C). As to expression, expressed in the kidney, along the length of the nephron.

It localises to the cell membrane. The protein resides in the basolateral cell membrane. It is found in the cell junction. Its subcellular location is the postsynaptic density membrane. The protein localises to the tight junction. Plays a role in establishing and maintaining the asymmetric distribution of channels and receptors at the plasma membrane of polarized cells. Forms membrane-associated multiprotein complexes that may regulate delivery and recycling of proteins to the correct membrane domains. The tripartite complex composed of LIN7 (LIN7A, LIN7B or LIN7C), CASK and APBA1 associates with the motor protein KIF17 to transport vesicles containing N-methyl-D-aspartate (NMDA) receptor subunit NR2B along microtubules. This complex may have the potential to couple synaptic vesicle exocytosis to cell adhesion in brain. Ensures the proper localization of GRIN2B (subunit 2B of the NMDA receptor) to neuronal postsynaptic density and may function in localizing synaptic vesicles at synapses where it is recruited by beta-catenin and cadherin. Required to localize Kir2 channels, GABA transporter (SLC6A12) and EGFR/ERBB1, ERBB2, ERBB3 and ERBB4 to the basolateral membrane of epithelial cells. The chain is Protein lin-7 homolog A (Lin7a) from Mus musculus (Mouse).